The chain runs to 362 residues: MAALTLQSVKKTYDGKQFVLHGIDVDVADGEFVVMVGPSGCGKSTLLRMVAGLERISEGSISIAGKVVNQLEPKDRNIAMVFQNYALYPHMSVAENMGYALKIAGVDRAQIQKRVNAAAQILELEALLQRKPRELSGGQRQRVAMGRAIVREPAVFLFDEPLSNLDARLRVQMRLEIQRLHARLATTSLYVTHDQIEAMTLAQRVIVMNKGHAEQIGAPTEVYERPATVFVASFIGSPGMNLLEGRVSDDGAVFAVAGNGPELPLAGVVSIGREVAKGREWTLGIRPEHMSPGQADAPHATLTVDSCELLGADNLAHGRWGKHDVTVRLPHAHRPAAGEALQVALPAQHLHFFDPASGRRAN.

One can recognise an ABC transporter domain in the interval Leu4–Ile235. An ATP-binding site is contributed by Gly37 to Ser44.

The protein belongs to the ABC transporter superfamily. sn-glycerol-3-phosphate importer (TC 3.A.1.1.3) family. As to quaternary structure, the complex is composed of two ATP-binding proteins (UgpC), two transmembrane proteins (UgpA and UgpE) and a solute-binding protein (UgpB).

It localises to the cell inner membrane. It catalyses the reaction sn-glycerol 3-phosphate(out) + ATP + H2O = sn-glycerol 3-phosphate(in) + ADP + phosphate + H(+). Its function is as follows. Part of the ABC transporter complex UgpBAEC involved in sn-glycerol-3-phosphate (G3P) import. Responsible for energy coupling to the transport system. The protein is sn-glycerol-3-phosphate import ATP-binding protein UgpC of Paraburkholderia xenovorans (strain LB400).